The sequence spans 945 residues: LPS-assembly protein LptD (945 aa).

The first 33 residues, 1 to 33, serve as a signal peptide directing secretion; sequence MALKSPAFRKKFPLLVTGSLLALQPLATSFVVA. Positions 56 to 98 are disordered; sequence AQLPPRPVHDANSVSSSVATAADATGEEASGDKSKLVTEAKGR. The span at 65 to 79 shows a compositional bias: low complexity; the sequence is DANSVSSSVATAADA. Over residues 85 to 98 the composition is skewed to basic and acidic residues; the sequence is SGDKSKLVTEAKGR.

The protein belongs to the LptD family. Component of the lipopolysaccharide transport and assembly complex. Interacts with LptE and LptA.

It is found in the cell outer membrane. Together with LptE, is involved in the assembly of lipopolysaccharide (LPS) at the surface of the outer membrane. The sequence is that of LPS-assembly protein LptD from Pseudomonas fluorescens (strain ATCC BAA-477 / NRRL B-23932 / Pf-5).